Reading from the N-terminus, the 486-residue chain is ATP-dependent rRNA helicase RRP3 (486 aa).

Basic residues predominate over residues 1 to 11 (MSKVTKQSKSH). A disordered region spans residues 1-52 (MSKVTKQSKSHKSSELVSLAEKIKQKALENRKQSREESQATEEANTASETEA). Residues 17–49 (VSLAEKIKQKALENRKQSREESQATEEANTASE) adopt a coiled-coil conformation. The span at 21-38 (EKIKQKALENRKQSREES) shows a compositional bias: basic and acidic residues. Residues 41-52 (TEEANTASETEA) are compositionally biased toward low complexity. Residues 66–94 (SSFRELDLVPELIEACDNLNFTKPTPIQS) carry the Q motif motif. The region spanning 97-269 (IPPALQGKDI…RASLTNPVKC (173 aa)) is the Helicase ATP-binding domain. 110-117 (AQTGSGKT) contributes to the ATP binding site. Residues 216–219 (DEAD) carry the DEAD box motif. In terms of domain architecture, Helicase C-terminal spans 300 to 446 (LLNEFIGKTT…SIVLSLRDSV (147 aa)). A disordered region spans residues 459–486 (RRNKEKQTRGKGRRSRTATRENMDKEEE). Over residues 476–486 (ATRENMDKEEE) the composition is skewed to basic and acidic residues.

The protein belongs to the DEAD box helicase family. DDX47/RRP3 subfamily. In terms of assembly, interacts with the SSU processome.

Its subcellular location is the nucleus. The enzyme catalyses ATP + H2O = ADP + phosphate + H(+). Its function is as follows. ATP-dependent rRNA helicase required for pre-ribosomal RNA processing. Involved in the maturation of the 35S-pre-rRNA and to its cleavage to mature 18S rRNA. This is ATP-dependent rRNA helicase RRP3 from Eremothecium gossypii (strain ATCC 10895 / CBS 109.51 / FGSC 9923 / NRRL Y-1056) (Yeast).